The following is a 212-amino-acid chain: Small ribosomal subunit protein eS1 (212 aa).

The protein belongs to the eukaryotic ribosomal protein eS1 family.

In Staphylothermus marinus (strain ATCC 43588 / DSM 3639 / JCM 9404 / F1), this protein is Small ribosomal subunit protein eS1.